Here is a 249-residue protein sequence, read N- to C-terminus: Triosephosphate isomerase (249 aa).

The substrate site is built by asparagine 12 and lysine 14. Lysine 14 is modified (N6-acetyllysine). Asparagine 16 bears the Deamidated asparagine mark. Residue tyrosine 68 is modified to 3'-nitrotyrosine. Asparagine 72 carries the deamidated asparagine modification. Serine 80 bears the Phosphoserine mark. Histidine 96 serves as the catalytic Electrophile. Serine 106 bears the Phosphoserine mark. Residue lysine 142 forms a Glycyl lysine isopeptide (Lys-Gly) (interchain with G-Cter in SUMO1) linkage. Lysine 149 carries the N6-succinyllysine modification. Lysine 156 is modified (N6-acetyllysine; alternate). Residue lysine 156 is modified to N6-succinyllysine; alternate. Serine 159 carries the phosphoserine modification. The active-site Proton acceptor is the glutamate 166. Threonine 173 carries the post-translational modification Phosphothreonine. Lysine 194 is subject to N6-acetyllysine; alternate. Lysine 194 carries the post-translational modification N6-succinyllysine; alternate. N6-methyllysine; alternate is present on lysine 194. At serine 198 the chain carries Phosphoserine. Tyrosine 209 carries the 3'-nitrotyrosine modification. Position 212 is a phosphoserine (serine 212). The residue at position 214 (threonine 214) is a Phosphothreonine. At serine 223 the chain carries Phosphoserine. At lysine 238 the chain carries N6-acetyllysine.

Belongs to the triosephosphate isomerase family. Homodimer. In terms of processing, asn-16 and Asn-72 undergo deamidation which gives rise to four extra negative charges. These are expected to decrease subunit-subunit interactions and so expose the hydrophobic interface to the aqueous environment.

It localises to the cytoplasm. The catalysed reaction is D-glyceraldehyde 3-phosphate = dihydroxyacetone phosphate. It carries out the reaction dihydroxyacetone phosphate = methylglyoxal + phosphate. It functions in the pathway carbohydrate degradation; glycolysis; D-glyceraldehyde 3-phosphate from glycerone phosphate: step 1/1. The protein operates within carbohydrate biosynthesis; gluconeogenesis. In terms of biological role, triosephosphate isomerase is an extremely efficient metabolic enzyme that catalyzes the interconversion between dihydroxyacetone phosphate (DHAP) and D-glyceraldehyde-3-phosphate (G3P) in glycolysis and gluconeogenesis. It is also responsible for the non-negligible production of methylglyoxal a reactive cytotoxic side-product that modifies and can alter proteins, DNA and lipids. The polypeptide is Triosephosphate isomerase (TPI1) (Oryctolagus cuniculus (Rabbit)).